Reading from the N-terminus, the 742-residue chain is Synaptic vesicle glycoprotein 2A (742 aa).

The tract at residues Met1–Asp57 is interaction with SYT1. Residues Met1–Tyr169 lie on the Cytoplasmic side of the membrane. The segment covering Lys32–Phe49 has biased composition (basic and acidic residues). Positions Lys32–Glu144 are disordered. A phosphoserine mark is found at Ser80 and Ser81. Thr84 bears the Phosphothreonine mark. Residues Val122 to Gly137 show a composition bias toward gly residues. A helical membrane pass occupies residues Phe170–Leu190. At Pro191–Gly205 the chain is on the extracellular side. The helical transmembrane segment at Met206–Ala226 threads the bilayer. Residues Asp227–Gln233 lie on the Cytoplasmic side of the membrane. A helical transmembrane segment spans residues Cys234 to Gly254. At Tyr255–Arg262 the chain is on the extracellular side. Residues Leu263–Phe283 traverse the membrane as a helical segment. The Cytoplasmic portion of the chain corresponds to Leu284 to Ser294. A helical membrane pass occupies residues Trp295–Ile315. The Extracellular segment spans residues Pro316–Arg334. Residues Val335 to Pro355 form a helical membrane-spanning segment. The Cytoplasmic portion of the chain corresponds to Glu356–Thr447. Position 393 is a phosphoserine (Ser393). Residues Leu448–Phe468 form a helical membrane-spanning segment. The Extracellular portion of the chain corresponds to Pro469–Tyr598. Tyr480 bears the Phosphotyrosine mark. N-linked (GlcNAc...) asparagine glycosylation is found at Asn498, Asn548, and Asn573. The chain crosses the membrane as a helical span at residues Phe599 to Met619. Residues Asp620 to Arg626 lie on the Cytoplasmic side of the membrane. Residues Met627 to Ser647 traverse the membrane as a helical segment. The Extracellular portion of the chain corresponds to Glu648–Met651. A helical transmembrane segment spans residues Ile652–Leu672. The Cytoplasmic segment spans residues Thr673 to Ala685. The helical transmembrane segment at Phe686 to Val708 threads the bilayer. Residues Gly709–Lys712 are Extracellular-facing. A helical transmembrane segment spans residues Ala713–Leu731. Topologically, residues Lys732–Gln742 are cytoplasmic.

The protein belongs to the major facilitator superfamily. In terms of assembly, interacts with SYT1/synaptotagmin-1 in a calcium-dependent manner. Binds the adapter protein complex AP-2. Phosphorylation by CK1 of the N-terminal cytoplasmic domain regulates interaction with SYT1. In terms of processing, N-glycosylated.

The protein localises to the presynapse. It is found in the cytoplasmic vesicle. Its subcellular location is the secretory vesicle. It localises to the synaptic vesicle membrane. Plays a role in the control of regulated secretion in neural and endocrine cells, enhancing selectively low-frequency neurotransmission. Positively regulates vesicle fusion by maintaining the readily releasable pool of secretory vesicles. The polypeptide is Synaptic vesicle glycoprotein 2A (SV2A) (Bos taurus (Bovine)).